The chain runs to 252 residues: Ubiquinone/menaquinone biosynthesis C-methyltransferase UbiE (252 aa).

S-adenosyl-L-methionine-binding positions include Thr71, Asp100, 124 to 125, and Ser141; that span reads DA.

Belongs to the class I-like SAM-binding methyltransferase superfamily. MenG/UbiE family.

The enzyme catalyses a 2-demethylmenaquinol + S-adenosyl-L-methionine = a menaquinol + S-adenosyl-L-homocysteine + H(+). It carries out the reaction a 2-methoxy-6-(all-trans-polyprenyl)benzene-1,4-diol + S-adenosyl-L-methionine = a 5-methoxy-2-methyl-3-(all-trans-polyprenyl)benzene-1,4-diol + S-adenosyl-L-homocysteine + H(+). It functions in the pathway quinol/quinone metabolism; menaquinone biosynthesis; menaquinol from 1,4-dihydroxy-2-naphthoate: step 2/2. The protein operates within cofactor biosynthesis; ubiquinone biosynthesis. Its function is as follows. Methyltransferase required for the conversion of demethylmenaquinol (DMKH2) to menaquinol (MKH2) and the conversion of 2-polyprenyl-6-methoxy-1,4-benzoquinol (DDMQH2) to 2-polyprenyl-3-methyl-6-methoxy-1,4-benzoquinol (DMQH2). In Caulobacter vibrioides (strain ATCC 19089 / CIP 103742 / CB 15) (Caulobacter crescentus), this protein is Ubiquinone/menaquinone biosynthesis C-methyltransferase UbiE.